A 427-amino-acid polypeptide reads, in one-letter code: Glutamate-1-semialdehyde 2,1-aminomutase (427 aa).

K268 bears the N6-(pyridoxal phosphate)lysine mark.

This sequence belongs to the class-III pyridoxal-phosphate-dependent aminotransferase family. HemL subfamily. Requires pyridoxal 5'-phosphate as cofactor.

The protein resides in the cytoplasm. The enzyme catalyses (S)-4-amino-5-oxopentanoate = 5-aminolevulinate. It participates in porphyrin-containing compound metabolism; protoporphyrin-IX biosynthesis; 5-aminolevulinate from L-glutamyl-tRNA(Glu): step 2/2. This Methanococcus maripaludis (strain C5 / ATCC BAA-1333) protein is Glutamate-1-semialdehyde 2,1-aminomutase.